A 540-amino-acid polypeptide reads, in one-letter code: Solute carrier family 2, facilitated glucose transporter member 9 (540 aa).

The tract at residues 1 to 31 (MARKQNRNSKELGLVPLTDDTSHAGPPGPGR) is disordered. Topologically, residues 1–51 (MARKQNRNSKELGLVPLTDDTSHAGPPGPGRALLECDHLRSGVPGGRRRKD) are cytoplasmic. S9 carries the phosphoserine modification. A helical membrane pass occupies residues 52–72 (WSCSLLVASLAGAFGSSFLYG). Residues 73–107 (YNLSVVNAPTPYIKAFYNESWERRHGRPIDPDTLT) lie on the Extracellular side of the membrane. Residue N90 is glycosylated (N-linked (GlcNAc...) asparagine). The helical transmembrane segment at 108-128 (LLWSVTVSIFAIGGLVGTLIV) threads the bilayer. Topologically, residues 129–140 (KMIGKVLGRKHT) are cytoplasmic. The helical transmembrane segment at 141–161 (LLANNGFAISAALLMACSLQA) threads the bilayer. The Extracellular portion of the chain corresponds to 162 to 171 (GAFEMLIVGR). A helical transmembrane segment spans residues 172–192 (FIMGIDGGVALSVLPMYLSEI). Over 193–200 (SPKEIRGS) the chain is Cytoplasmic. The chain crosses the membrane as a helical span at residues 201–221 (LGQVTAIFICIGVFTGQLLGL). The Extracellular portion of the chain corresponds to 222–231 (PELLGKESTW). Residues 232 to 252 (PYLFGVIVVPAVVQLLSLPFL) traverse the membrane as a helical segment. At 253–316 (PDSPRYLLLE…LLRAPYVRWQ (64 aa)) the chain is on the cytoplasmic side. A helical transmembrane segment spans residues 317–337 (VVTVIVTMACYQLCGLNAIWF). Residues 338–354 (YTNSIFGKAGIPPAKIP) are Extracellular-facing. Residues 355 to 375 (YVTLSTGGIETLAAVFSGLVI) traverse the membrane as a helical segment. Residues 376–381 (EHLGRR) are Cytoplasmic-facing. The helical transmembrane segment at 382–402 (PLLIGGFGLMGLFFGTLTITL) threads the bilayer. Over 403-415 (TLQDHAPWVPYLS) the chain is Extracellular. The helical transmembrane segment at 416 to 436 (IVGILAIIASFCSGPGGIPFI) threads the bilayer. Residues 437–451 (LTGEFFQQSQRPAAF) are Cytoplasmic-facing. Residues 452–472 (IIAGTVNWLSNFAVGLLFPFI) form a helical membrane-spanning segment. The Extracellular segment spans residues 473–478 (QKSLDT). Residues 479-499 (YCFLVFATICITGAIYLYFVL) form a helical membrane-spanning segment. The Cytoplasmic segment spans residues 500 to 540 (PETKNRTYAEISQAFSKRNKAYPPEEKIDSAVTDGKINGRP). A Phosphoserine modification is found at S515. Residues 519-540 (KAYPPEEKIDSAVTDGKINGRP) form a disordered region.

It belongs to the major facilitator superfamily. Sugar transporter (TC 2.A.1.1) family. Glucose transporter subfamily. As to expression, most strongly expressed in basolateral membranes of proximal renal tubular cells, liver and placenta. Also detected in lung, blood leukocytes, heart skeletal muscle and chondrocytes from articular cartilage. Detected in kidney membrane (at protein level). Only detected in the apical membranes of polarized renal tubular cells and placenta. Detected in kidney membrane (at protein level).

Its subcellular location is the cell membrane. The protein localises to the basolateral cell membrane. It localises to the apical cell membrane. The enzyme catalyses urate(out) = urate(in). Its activity is regulated as follows. Extracellular glucose and urate accelerate urate efflux. Intracellular urate, glucose and fructose accelerate urate influx. No effect of extracellular urate, glucose or fructose on urate efflux. Intracellular urate and fructose slightly accelerate urate influx. Its function is as follows. High-capacity urate transporter, which may play a role in the urate reabsorption by proximal tubules. May have a residual high-affinity, low-capacity glucose and fructose transporter activity. Transports urate at rates 45- to 60-fold faster than glucose. Does not transport galactose. May mediate small uptake of adenine but not of other nucleobases. The protein is Solute carrier family 2, facilitated glucose transporter member 9 of Homo sapiens (Human).